Consider the following 46-residue polypeptide: U-myrmeciitoxin(01)-Mg6a (46 aa).

An N-terminal signal peptide occupies residues 1-20 (MNLKTFCFFLLGIFVTLTVT). Positions 21-33 (VIPIANADAEADT) are excised as a propeptide.

In terms of processing, contains 1 disulfide bond. Expressed by the venom gland.

The protein resides in the secreted. The sequence is that of U-myrmeciitoxin(01)-Mg6a from Myrmecia gulosa (Red bulldog ant).